The following is a 266-amino-acid chain: Thymidylate synthase (266 aa).

Arginine 24 is a dUMP binding site. Histidine 54 serves as a coordination point for (6R)-5,10-methylene-5,6,7,8-tetrahydrofolate. 129 to 130 (RR) is a dUMP binding site. Catalysis depends on cysteine 149, which acts as the Nucleophile. Residues 169–172 (RSAD), asparagine 180, and 210–212 (HIY) each bind dUMP. Residue aspartate 172 participates in (6R)-5,10-methylene-5,6,7,8-tetrahydrofolate binding. (6R)-5,10-methylene-5,6,7,8-tetrahydrofolate is bound at residue alanine 265.

This sequence belongs to the thymidylate synthase family. Bacterial-type ThyA subfamily. In terms of assembly, homodimer.

The protein localises to the cytoplasm. The catalysed reaction is dUMP + (6R)-5,10-methylene-5,6,7,8-tetrahydrofolate = 7,8-dihydrofolate + dTMP. It functions in the pathway pyrimidine metabolism; dTTP biosynthesis. Functionally, catalyzes the reductive methylation of 2'-deoxyuridine-5'-monophosphate (dUMP) to 2'-deoxythymidine-5'-monophosphate (dTMP) while utilizing 5,10-methylenetetrahydrofolate (mTHF) as the methyl donor and reductant in the reaction, yielding dihydrofolate (DHF) as a by-product. This enzymatic reaction provides an intracellular de novo source of dTMP, an essential precursor for DNA biosynthesis. This Mycobacterium bovis (strain ATCC BAA-935 / AF2122/97) protein is Thymidylate synthase.